Consider the following 108-residue polypeptide: Small ribosomal subunit protein bS18c (108 aa).

Basic residues-rich tracts occupy residues 1-19 (MDKS…RRRL) and 97-108 (RARKKKIGLLLN). Disordered regions lie at residues 1–23 (MDKS…PPIG) and 83–108 (QFER…LLLN).

Belongs to the bacterial ribosomal protein bS18 family. Part of the 30S ribosomal subunit.

It localises to the plastid. Its subcellular location is the chloroplast. This chain is Small ribosomal subunit protein bS18c, found in Illicium oligandrum (Star anise).